Reading from the N-terminus, the 231-residue chain is Ion-translocating oxidoreductase complex subunit E (231 aa).

The next 6 helical transmembrane spans lie at 18–38, 39–59, 63–83, 86–106, 125–145, and 182–202; these read ALVQ…ATNA, LGLG…ISTL, TPAE…VSAV, LINA…PLIV, ALSA…MFVL, and PFLL…MLAG.

The protein belongs to the NqrDE/RnfAE family. In terms of assembly, the complex is composed of six subunits: RsxA, RsxB, RsxC, RsxD, RsxE and RsxG.

The protein localises to the cell inner membrane. Part of a membrane-bound complex that couples electron transfer with translocation of ions across the membrane. Required to maintain the reduced state of SoxR. In Escherichia coli O7:K1 (strain IAI39 / ExPEC), this protein is Ion-translocating oxidoreductase complex subunit E.